Here is a 275-residue protein sequence, read N- to C-terminus: Lectin 8 (275 aa).

Residues 1–31 (MANSNPKLLVTQNPFSVFLLTFLLLITNVKS) form the signal peptide. Residues Asn55 and Asn150 are each glycosylated (N-linked (GlcNAc...) asparagine).

It belongs to the leguminous lectin family.

Functionally, may be involved in arbuscular mycorrhizal (AM) symbiosis with AM fungi. This is Lectin 8 from Medicago truncatula (Barrel medic).